Reading from the N-terminus, the 1485-residue chain is Cystic fibrosis transmembrane conductance regulator (1485 aa).

Residues 1–78 (MQKTPLEKAS…KLINALKRCF (78 aa)) lie on the Cytoplasmic side of the membrane. The helical transmembrane segment at 79–99 (FWKFLFYGILLYLGEVTKAVQ) threads the bilayer. An ABC transmembrane type-1 1 domain is found at 82–366 (FLFYGILLYL…WAVQTWYDSL (285 aa)). Topologically, residues 100-123 (PLLLGRIIASYDRDNEHERSIAYY) are extracellular. The chain crosses the membrane as a helical span at residues 124–147 (LAIGLCLLFVVRMLLLHPAIFGLH). Residues 148-196 (HIGMQMRIAMFSLIYKKTLKLSSKVLDKISTGQLVSLLSNNLNKFDEGL) lie on the Cytoplasmic side of the membrane. The chain crosses the membrane as a helical span at residues 197 to 217 (ALAHFVWIAPLQVLLLMGLLW). Residues 218-223 (DLLQAS) are Extracellular-facing. The chain crosses the membrane as a helical span at residues 224–244 (AFCGLGFLIILSLFQARLGRM). Residues 245–299 (MMKYKDKRAGKINERLVITSQIIENIQSVKAYCWENAMEKIIETIRETELKLTRK) lie on the Cytoplasmic side of the membrane. The chain crosses the membrane as a helical span at residues 300–320 (AAYVRYFNSSAFFFSGFFVVF). At 321 to 340 (LSIVPHLLLDGISLRKIFTT) the chain is on the extracellular side. The helical transmembrane segment at 341–359 (ISFSIVLRMAVTRQFPWAV) threads the bilayer. The Cytoplasmic segment spans residues 360 to 860 (QTWYDSLGVI…YLRFLTAHKN (501 aa)). Residues tryptophan 402, serine 435, 459 to 466 (GSTGAGKT), and glutamine 494 contribute to the ATP site. The 226-residue stretch at 422 to 647 (ISNEDPSAFF…RPEFSSHLIG (226 aa)) folds into the ABC transporter 1 domain. The disordered R region stretch occupies residues 652–833 (NAERRNSIIT…EEINEEDLKE (182 aa)). Residues 750 to 760 (PRSNFLNTGPT) are compositionally biased toward polar residues. A helical membrane pass occupies residues 861-881 (FIFILVFCLVIFFVEVAASSA). Residues 880–1163 (SAWLWIIKRN…ASIDVDSLMR (284 aa)) form the ABC transmembrane type-1 2 domain. At 882–923 (WLWIIKRNAPAINMTSNENVSEVSDTLSVIVTHTSFYYVFYI) the chain is on the extracellular side. Residues asparagine 894 and asparagine 900 are each glycosylated (N-linked (GlcNAc...) asparagine). A discontinuously helical membrane pass occupies residues 924 to 944 (YVGVADSLLALGIFRGLPLVH). Topologically, residues 945-995 (SLISVSKVLHKKMLHAILHAPMSTFNTMRAGRILNRFSKDTAILDDILPLS) are cytoplasmic. A helical transmembrane segment spans residues 996–1016 (IFDLTQLVLIVIGAITVVSLL). The Extracellular portion of the chain corresponds to 1017-1018 (EP). The chain crosses the membrane as a helical span at residues 1019–1039 (YIFLATVPVIVAFILLRSYFL). Residues 1040 to 1100 (HTSQQLKQLE…TANWFLYLST (61 aa)) lie on the Cytoplasmic side of the membrane. A helical membrane pass occupies residues 1101 to 1121 (LRWFQMTIEMIFVIFFIAVSF). The Extracellular portion of the chain corresponds to 1122–1135 (ISIATSGAGEEKVG). A helical membrane pass occupies residues 1136–1156 (IVLTLAMNIMNTLQWAVNASI). The Cytoplasmic segment spans residues 1157–1485 (DVDSLMRSVS…TEEEVQDTRL (329 aa)). In terms of domain architecture, ABC transporter 2 spans 1213 to 1446 (MTVKNLSANY…KSFFKQAISH (234 aa)). Residues tyrosine 1222 and 1247-1254 (GRTGSGKS) contribute to the ATP site. The tract at residues 1458-1485 (RNSSKRKSRPQISALQEETEEEVQDTRL) is disordered. The span at 1474–1485 (EETEEEVQDTRL) shows a compositional bias: acidic residues. A PDZ-binding motif is present at residues 1483-1485 (TRL).

It belongs to the ABC transporter superfamily. ABCC family. CFTR transporter (TC 3.A.1.202) subfamily. In terms of assembly, monomer; does not require oligomerization for channel activity. May form oligomers in the membrane. Phosphorylated; cAMP treatment promotes phosphorylation and activates the channel. Dephosphorylation decreases the ATPase activity (in vitro). Phosphorylation at PKA sites activates the channel. Phosphorylation at PKC sites enhances the response to phosphorylation by PKA.

It is found in the apical cell membrane. The protein localises to the early endosome membrane. It localises to the cell membrane. Its subcellular location is the recycling endosome membrane. The protein resides in the endoplasmic reticulum membrane. The catalysed reaction is ATP + H2O + closed Cl(-) channel = ADP + phosphate + open Cl(-) channel.. It carries out the reaction chloride(in) = chloride(out). The enzyme catalyses hydrogencarbonate(in) = hydrogencarbonate(out). It catalyses the reaction ATP + H2O = ADP + phosphate + H(+). In terms of biological role, epithelial ion channel that plays an important role in the regulation of epithelial ion and water transport and fluid homeostasis. Mediates the transport of chloride ions across the cell membrane. Possesses an intrinsic ATPase activity and utilizes ATP to gate its channel; the passive flow of anions through the channel is gated by cycles of ATP binding and hydrolysis by the ATP-binding domains. The ion channel is also permeable to HCO(3)(-); selectivity depends on the extracellular chloride concentration. Exerts its function also by modulating the activity of other ion channels and transporters. Contributes to the regulation of the pH and the ion content of the epithelial fluid layer. The sequence is that of Cystic fibrosis transmembrane conductance regulator from Xenopus laevis (African clawed frog).